We begin with the raw amino-acid sequence, 134 residues long: Probable histone H2A.3 (134 aa).

The protein belongs to the histone H2A family. The nucleosome is a histone octamer containing two molecules each of H2A, H2B, H3 and H4 assembled in one H3-H4 heterotetramer and two H2A-H2B heterodimers. The octamer wraps approximately 147 bp of DNA.

It is found in the nucleus. Its subcellular location is the chromosome. Core component of nucleosome. Nucleosomes wrap and compact DNA into chromatin, limiting DNA accessibility to the cellular machineries which require DNA as a template. Histones thereby play a central role in transcription regulation, DNA repair, DNA replication and chromosomal stability. DNA accessibility is regulated via a complex set of post-translational modifications of histones, also called histone code, and nucleosome remodeling. This chain is Probable histone H2A.3, found in Oryza sativa subsp. indica (Rice).